The following is a 443-amino-acid chain: Serine--tRNA ligase (443 aa).

246–248 (TAE) contacts L-serine. An ATP-binding site is contributed by 277 to 279 (RAE). Glu-300 is an L-serine binding site. Position 367–370 (367–370 (EISS)) interacts with ATP. Ser-402 serves as a coordination point for L-serine.

The protein belongs to the class-II aminoacyl-tRNA synthetase family. Type-1 seryl-tRNA synthetase subfamily. As to quaternary structure, homodimer. The tRNA molecule binds across the dimer.

The protein resides in the cytoplasm. It carries out the reaction tRNA(Ser) + L-serine + ATP = L-seryl-tRNA(Ser) + AMP + diphosphate + H(+). The catalysed reaction is tRNA(Sec) + L-serine + ATP = L-seryl-tRNA(Sec) + AMP + diphosphate + H(+). The protein operates within aminoacyl-tRNA biosynthesis; selenocysteinyl-tRNA(Sec) biosynthesis; L-seryl-tRNA(Sec) from L-serine and tRNA(Sec): step 1/1. Its function is as follows. Catalyzes the attachment of serine to tRNA(Ser). Is also able to aminoacylate tRNA(Sec) with serine, to form the misacylated tRNA L-seryl-tRNA(Sec), which will be further converted into selenocysteinyl-tRNA(Sec). The polypeptide is Serine--tRNA ligase (Bradyrhizobium diazoefficiens (strain JCM 10833 / BCRC 13528 / IAM 13628 / NBRC 14792 / USDA 110)).